Reading from the N-terminus, the 225-residue chain is NAD(P)H-quinone oxidoreductase subunit K, chloroplastic (225 aa).

[4Fe-4S] cluster is bound by residues C43, C44, C108, and C139.

Belongs to the complex I 20 kDa subunit family. As to quaternary structure, NDH is composed of at least 16 different subunits, 5 of which are encoded in the nucleus. The cofactor is [4Fe-4S] cluster.

The protein resides in the plastid. Its subcellular location is the chloroplast thylakoid membrane. It catalyses the reaction a plastoquinone + NADH + (n+1) H(+)(in) = a plastoquinol + NAD(+) + n H(+)(out). The enzyme catalyses a plastoquinone + NADPH + (n+1) H(+)(in) = a plastoquinol + NADP(+) + n H(+)(out). Functionally, NDH shuttles electrons from NAD(P)H:plastoquinone, via FMN and iron-sulfur (Fe-S) centers, to quinones in the photosynthetic chain and possibly in a chloroplast respiratory chain. The immediate electron acceptor for the enzyme in this species is believed to be plastoquinone. Couples the redox reaction to proton translocation, and thus conserves the redox energy in a proton gradient. This Nuphar advena (Common spatterdock) protein is NAD(P)H-quinone oxidoreductase subunit K, chloroplastic.